Consider the following 67-residue polypeptide: Large ribosomal subunit protein eL24 (67 aa).

Cys7, Cys10, Cys33, and Cys37 together coordinate Zn(2+). Residues 7-37 (CDYCGTDIEPGTGTMFVHKDGATTHFCSSKC) form a C4-type zinc finger. Residues 48 to 60 (RNLEWTDTARGEA) show a composition bias toward basic and acidic residues. A disordered region spans residues 48–67 (RNLEWTDTARGEAGEAEDEA).

Belongs to the eukaryotic ribosomal protein eL24 family. Part of the 50S ribosomal subunit. Forms a cluster with proteins L3 and L14. Zn(2+) is required as a cofactor.

Binds to the 23S rRNA. This chain is Large ribosomal subunit protein eL24 (rpl24e), found in Haloarcula marismortui (strain ATCC 43049 / DSM 3752 / JCM 8966 / VKM B-1809) (Halobacterium marismortui).